A 228-amino-acid polypeptide reads, in one-letter code: Heptaprenylglyceryl phosphate synthase (228 aa).

Lysine 12 lines the sn-glycerol 1-phosphate pocket. Residues aspartate 14 and serine 40 each coordinate Mg(2+). Sn-glycerol 1-phosphate contacts are provided by residues 158–163, glycine 188, and 208–209; these read YLEYSG and GN.

The protein belongs to the GGGP/HepGP synthase family. Group I subfamily. Homodimer. It depends on Mg(2+) as a cofactor.

The catalysed reaction is sn-glycerol 1-phosphate + all-trans-heptaprenyl diphosphate = 3-heptaprenyl-sn-glycero-1-phosphate + diphosphate. It functions in the pathway membrane lipid metabolism; glycerophospholipid metabolism. Functionally, prenyltransferase that catalyzes in vivo the transfer of the heptaprenyl moiety of heptaprenyl pyrophosphate (HepPP; 35 carbon atoms) to the C3 hydroxyl of sn-glycerol-1-phosphate (G1P), producing heptaprenylglyceryl phosphate (HepGP). This reaction is an ether-bond-formation step in the biosynthesis of archaea-type G1P-based membrane lipids found in Bacillales. To a much lesser extent, is also able to use geranyl diphosphate (GPP; C10) and geranylgeranyl diphosphate (GGPP; C20) as the prenyl donors, but not farnesyl pyrophosphate (FPP; C15). Cannot use glycerol-3-phosphate (G3P) or 3-phosphoglycerate (3PG) as an acceptor. This is Heptaprenylglyceryl phosphate synthase from Bacillus subtilis (strain 168).